A 112-amino-acid chain; its full sequence is Ribosomal processing cysteine protease Prp (112 aa).

Histidine 22 (proton donor) is an active-site residue. Cysteine 34 functions as the Nucleophile in the catalytic mechanism.

Belongs to the Prp family. In terms of assembly, homodimer.

Its function is as follows. An essential cysteine protease that cleaves the N-terminus from ribosomal protein bL27. In Bacillus subtilis (strain 168), this protein is Ribosomal processing cysteine protease Prp.